The following is a 230-amino-acid chain: Phosphatidate cytidylyltransferase (230 aa).

Transmembrane regions (helical) follow at residues 33 to 53 (FVIA…LVGT), 67 to 87 (IPDL…LIFL), 95 to 115 (WLIM…MIGG), 133 to 153 (WSGL…VSFI), 167 to 187 (IYLF…DLFI), and 206 to 226 (HGGV…LFLM).

The protein belongs to the CDS family.

It localises to the cell membrane. It catalyses the reaction a 1,2-diacyl-sn-glycero-3-phosphate + CTP + H(+) = a CDP-1,2-diacyl-sn-glycerol + diphosphate. The protein operates within phospholipid metabolism; CDP-diacylglycerol biosynthesis; CDP-diacylglycerol from sn-glycerol 3-phosphate: step 3/3. The protein is Phosphatidate cytidylyltransferase (cdsA) of Rickettsia conorii (strain ATCC VR-613 / Malish 7).